Here is a 230-residue protein sequence, read N- to C-terminus: Voltage-gated hydrogen channel 1 (230 aa).

At 1-58 the chain is on the cytoplasmic side; it reads MAGCLRHFTSVGDDTKKKAWKEEDVEVAHEEEPKNTPHPFIASYSFRGALKWLFSSHK. The helical transmembrane segment at 59-79 threads the bilayer; it reads FQIVIICLVILDALFVLVEVL. Residues 80 to 96 lie on the Extracellular side of the membrane; the sequence is LDLELLAEKVDHIIPEI. Residues 97 to 119 form a helical membrane-spanning segment; it reads FHYLSISVLSFFILEIAGKLYAF. Topologically, residues 120–127 are cytoplasmic; the sequence is RLEFFHHK. A helical membrane pass occupies residues 128 to 148; that stretch reads FEVFDAAIVVISFIIDIVYIS. Topologically, residues 149–155 are extracellular; it reads REDIFNA. A helical membrane pass occupies residues 156–176; sequence VGLLILLRLWRVARIVNGIIV. A coiled-coil region spans residues 177 to 226; it reads SVKTQAEDKIHRLKENQESLLEKVAHLEQQCAQQEQEIVRLQTLLQQHNV. Topologically, residues 177–230 are cytoplasmic; the sequence is SVKTQAEDKIHRLKENQESLLEKVAHLEQQCAQQEQEIVRLQTLLQQHNVFPAS.

Belongs to the hydrogen channel family. As to quaternary structure, homodimer.

The protein localises to the membrane. The protein resides in the cell membrane. Its function is as follows. Mediates the voltage-dependent proton permeability of excitable membranes. Forms a proton-selective channel through which protons may pass in accordance with their electrochemical gradient. The polypeptide is Voltage-gated hydrogen channel 1 (hvcn1) (Xenopus tropicalis (Western clawed frog)).